Here is a 186-residue protein sequence, read N- to C-terminus: ADP-ribosylation factor-like protein 8A (186 aa).

An intramembrane region (note=Mediates targeting to membranes) is located at residues 1-19; the sequence is MIALFNKLLDWFKALFWKE. Residues 29–35, 71–75, and 130–133 each bind GTP; these read QYSGKTT, DIGGQ, and NKRD.

This sequence belongs to the small GTPase superfamily. Arf family. Interacts with PLEKHM1. When GTP-bound, interacts with RUFY3 and RUFY4, but not with RUFY1, nor RUFY2. In terms of tissue distribution, ubiquitously expressed.

Its subcellular location is the late endosome membrane. The protein resides in the lysosome membrane. It localises to the cytoplasm. The protein localises to the cytoskeleton. It is found in the spindle. Its subcellular location is the cell projection. The protein resides in the axon. It localises to the synapse. Its function is as follows. Plays a role in lysosome motility. In neurons, mediates the anterograde axonal long-range transport of presynaptic lysosome-related vesicles required for presynaptic biogenesis and synaptic function. May play a role in chromosome segregation. The sequence is that of ADP-ribosylation factor-like protein 8A (ARL8A) from Homo sapiens (Human).